The sequence spans 130 residues: Large ribosomal subunit protein bL12 (130 aa).

It belongs to the bacterial ribosomal protein bL12 family. As to quaternary structure, homodimer. Part of the ribosomal stalk of the 50S ribosomal subunit. Forms a multimeric L10(L12)X complex, where L10 forms an elongated spine to which 2 to 4 L12 dimers bind in a sequential fashion. Binds GTP-bound translation factors.

Its function is as follows. Forms part of the ribosomal stalk which helps the ribosome interact with GTP-bound translation factors. Is thus essential for accurate translation. The sequence is that of Large ribosomal subunit protein bL12 from Thermobifida fusca (strain YX).